A 337-amino-acid chain; its full sequence is DNA-directed RNA polymerase subunit alpha (337 aa).

Residues 1 to 233 form an alpha N-terminal domain (alpha-NTD) region; the sequence is MIQKNWQELI…DQLSLFVNFE (233 aa). The interval 249 to 337 is alpha C-terminal domain (alpha-CTD); sequence FNPALLKKVD…DLAKRYEDQY (89 aa).

It belongs to the RNA polymerase alpha chain family. Homodimer. The RNAP catalytic core consists of 2 alpha, 1 beta, 1 beta' and 1 omega subunit. When a sigma factor is associated with the core the holoenzyme is formed, which can initiate transcription.

It catalyses the reaction RNA(n) + a ribonucleoside 5'-triphosphate = RNA(n+1) + diphosphate. Its function is as follows. DNA-dependent RNA polymerase catalyzes the transcription of DNA into RNA using the four ribonucleoside triphosphates as substrates. This chain is DNA-directed RNA polymerase subunit alpha, found in Bartonella quintana (strain Toulouse) (Rochalimaea quintana).